Consider the following 714-residue polypeptide: Polyribonucleotide nucleotidyltransferase (714 aa).

Residues Asp-488 and Asp-494 each coordinate Mg(2+). The region spanning 555-614 is the KH domain; the sequence is PRIEVMNIPTDKIRDVIGSGGKVIREIVEKTGAKINIEDDGTVKIASSNGKEIEAAKKWI. Residues 624–692 form the S1 motif domain; the sequence is GEIYEGTVVK…ERGKVRLSMK (69 aa).

It belongs to the polyribonucleotide nucleotidyltransferase family. Mg(2+) serves as cofactor.

It is found in the cytoplasm. It catalyses the reaction RNA(n+1) + phosphate = RNA(n) + a ribonucleoside 5'-diphosphate. Its function is as follows. Involved in mRNA degradation. Catalyzes the phosphorolysis of single-stranded polyribonucleotides processively in the 3'- to 5'-direction. This is Polyribonucleotide nucleotidyltransferase from Brucella ovis (strain ATCC 25840 / 63/290 / NCTC 10512).